The primary structure comprises 176 residues: Adenine phosphoribosyltransferase (176 aa).

Belongs to the purine/pyrimidine phosphoribosyltransferase family. As to quaternary structure, homodimer.

The protein localises to the cytoplasm. It carries out the reaction AMP + diphosphate = 5-phospho-alpha-D-ribose 1-diphosphate + adenine. It functions in the pathway purine metabolism; AMP biosynthesis via salvage pathway; AMP from adenine: step 1/1. In terms of biological role, catalyzes a salvage reaction resulting in the formation of AMP, that is energically less costly than de novo synthesis. This chain is Adenine phosphoribosyltransferase, found in Bacteroides thetaiotaomicron (strain ATCC 29148 / DSM 2079 / JCM 5827 / CCUG 10774 / NCTC 10582 / VPI-5482 / E50).